Here is a 280-residue protein sequence, read N- to C-terminus: uncharacterized protein (280 aa).

Helical transmembrane passes span 6-26, 38-58, 79-99, 105-125, 144-164, 171-191, and 231-251; these read YLVI…TPLV, VLAI…YLFP, IFLL…VFLK, GVLA…ELIF, NQIY…IILW, ISFF…ALMV, and LVFI…TLFA.

The protein resides in the cell membrane. This is an uncharacterized protein from Mycoplasma genitalium (strain ATCC 33530 / DSM 19775 / NCTC 10195 / G37) (Mycoplasmoides genitalium).